A 1389-amino-acid polypeptide reads, in one-letter code: DNA-directed RNA polymerase subunit beta' (1389 aa).

Residues C73, C75, C88, and C91 each contribute to the Zn(2+) site. Mg(2+) contacts are provided by D464, D466, and D468. C810, C884, C891, and C894 together coordinate Zn(2+).

It belongs to the RNA polymerase beta' chain family. The RNAP catalytic core consists of 2 alpha, 1 beta, 1 beta' and 1 omega subunit. When a sigma factor is associated with the core the holoenzyme is formed, which can initiate transcription. The cofactor is Mg(2+). Zn(2+) is required as a cofactor.

It catalyses the reaction RNA(n) + a ribonucleoside 5'-triphosphate = RNA(n+1) + diphosphate. In terms of biological role, DNA-dependent RNA polymerase catalyzes the transcription of DNA into RNA using the four ribonucleoside triphosphates as substrates. The chain is DNA-directed RNA polymerase subunit beta' from Pelagibacter ubique (strain HTCC1062).